Reading from the N-terminus, the 138-residue chain is MGGWMLCAPPIYTPHTNSWTERWDRTSWWRWSAQRWSGWSFKIVRANKALRVMAKTKMPLVLIPPSPNKPYSKLAINQELHLIPPKKTSPATSSSLKPRPGPRGCLNARLSWRCPTLSRKVRVPTIKVPMVRAPSTPP.

The disordered stretch occupies residues 84–104 (PPKKTSPATSSSLKPRPGPRG). Over residues 85-98 (PKKTSPATSSSLKP) the composition is skewed to low complexity.

To M.pneumoniae MPN_413 and MPN_463.

This is an uncharacterized protein from Mycoplasma pneumoniae (strain ATCC 29342 / M129 / Subtype 1) (Mycoplasmoides pneumoniae).